Consider the following 319-residue polypeptide: D-alanine--D-alanine ligase (319 aa).

Positions 120–315 constitute an ATP-grasp domain; it reads KRVLAQAGVP…YPELLRRLVE (196 aa). 147–198 serves as a coordination point for ATP; it reads DPPFFVKPANTGSSVGISRVERFQDLEAALALAFRYDEKAVVEKALSPVREL. Residues Asp270, Glu282, and Asn284 each coordinate Mg(2+).

This sequence belongs to the D-alanine--D-alanine ligase family. Requires Mg(2+) as cofactor. Mn(2+) is required as a cofactor.

It is found in the cytoplasm. It catalyses the reaction 2 D-alanine + ATP = D-alanyl-D-alanine + ADP + phosphate + H(+). The protein operates within cell wall biogenesis; peptidoglycan biosynthesis. In terms of biological role, cell wall formation. The chain is D-alanine--D-alanine ligase from Thermus thermophilus (strain ATCC BAA-163 / DSM 7039 / HB27).